Consider the following 330-residue polypeptide: DNA-directed RNA polymerase subunit alpha (330 aa).

Positions 1–235 (MVREKVKVST…DLFIHFLHAK (235 aa)) are alpha N-terminal domain (alpha-NTD). An alpha C-terminal domain (alpha-CTD) region spans residues 270–330 (IALKYIFIDQ…KQILGILEKK (61 aa)).

Belongs to the RNA polymerase alpha chain family. In plastids the minimal PEP RNA polymerase catalytic core is composed of four subunits: alpha, beta, beta', and beta''. When a (nuclear-encoded) sigma factor is associated with the core the holoenzyme is formed, which can initiate transcription.

It is found in the plastid. It localises to the chloroplast. The catalysed reaction is RNA(n) + a ribonucleoside 5'-triphosphate = RNA(n+1) + diphosphate. In terms of biological role, DNA-dependent RNA polymerase catalyzes the transcription of DNA into RNA using the four ribonucleoside triphosphates as substrates. In Gossypium barbadense (Sea Island cotton), this protein is DNA-directed RNA polymerase subunit alpha (rpoA).